The primary structure comprises 593 residues: ATP-dependent lipid A-core flippase (593 aa).

6 helical membrane-spanning segments follow: residues 33-55 (YIFL…YGFG), 67-87 (ILML…VGSF), 146-166 (AIIT…VMFV), 169-189 (WQLS…ISII), 258-278 (VIQI…AIFG), and 284-304 (GSSW…AAIL). In terms of domain architecture, ABC transmembrane type-1 spans 38-319 (ADASMIYLIN…LTKVNVVIQK (282 aa)). The ABC transporter domain occupies 351–585 (VTIKDLSFAF…GGLYTGSINR (235 aa)). 383-390 (GKSGSGKT) provides a ligand contact to ATP.

This sequence belongs to the ABC transporter superfamily. Lipid exporter (TC 3.A.1.106) family. In terms of assembly, homodimer.

It localises to the cell membrane. The enzyme catalyses ATP + H2O + lipid A-core oligosaccharideSide 1 = ADP + phosphate + lipid A-core oligosaccharideSide 2.. Involved in lipopolysaccharide (LPS) biosynthesis. Translocates lipid A-core from the inner to the outer leaflet of the inner membrane. Transmembrane domains (TMD) form a pore in the inner membrane and the ATP-binding domain (NBD) is responsible for energy generation. The polypeptide is ATP-dependent lipid A-core flippase (Francisella novicida).